Reading from the N-terminus, the 531-residue chain is Na(+)/H(+) antiporter NhaB (531 aa).

Helical transmembrane passes span 13–33 (FLGK…IINP), 34–54 (LVFF…EFIF), 90–110 (LVAN…IYFM), 121–141 (ILIG…TAAF), 145–165 (FLDA…FYAI), 206–226 (LLMH…VGEP), 242–262 (FIIR…LTCV), 308–328 (VIAV…GLIG), 352–372 (EEAL…AVII), 394–414 (LALF…VFVG), 456–476 (GQAA…QLSY), and 482–502 (MALP…SFLL).

It belongs to the NhaB Na(+)/H(+) (TC 2.A.34) antiporter family.

Its subcellular location is the cell inner membrane. The catalysed reaction is 2 Na(+)(in) + 3 H(+)(out) = 2 Na(+)(out) + 3 H(+)(in). Functionally, na(+)/H(+) antiporter that extrudes sodium in exchange for external protons. This chain is Na(+)/H(+) antiporter NhaB, found in Aliivibrio salmonicida (strain LFI1238) (Vibrio salmonicida (strain LFI1238)).